We begin with the raw amino-acid sequence, 279 residues long: Proteasome subunit beta (279 aa).

Positions 1–56 (MASQAMSWRGEGERVVRDLAAASTSSFVEHLSQSRPDLLPFGQALPAGVLPQTPHA) are cleaved as a propeptide — removed in mature form; by autocatalysis. Thr-57 serves as the catalytic Nucleophile.

It belongs to the peptidase T1B family. In terms of assembly, the 20S proteasome core is composed of 14 alpha and 14 beta subunits that assemble into four stacked heptameric rings, resulting in a barrel-shaped structure. The two inner rings, each composed of seven catalytic beta subunits, are sandwiched by two outer rings, each composed of seven alpha subunits. The catalytic chamber with the active sites is on the inside of the barrel. Has a gated structure, the ends of the cylinder being occluded by the N-termini of the alpha-subunits. Is capped by the proteasome-associated ATPase, ARC.

It localises to the cytoplasm. It catalyses the reaction Cleavage of peptide bonds with very broad specificity.. Its pathway is protein degradation; proteasomal Pup-dependent pathway. The formation of the proteasomal ATPase ARC-20S proteasome complex, likely via the docking of the C-termini of ARC into the intersubunit pockets in the alpha-rings, may trigger opening of the gate for substrate entry. Interconversion between the open-gate and close-gate conformations leads to a dynamic regulation of the 20S proteasome proteolysis activity. Component of the proteasome core, a large protease complex with broad specificity involved in protein degradation. The polypeptide is Proteasome subunit beta (Renibacterium salmoninarum (strain ATCC 33209 / DSM 20767 / JCM 11484 / NBRC 15589 / NCIMB 2235)).